The sequence spans 251 residues: Triosephosphate isomerase (251 aa).

Asparagine 9–lysine 11 contacts substrate. Histidine 95 (electrophile) is an active-site residue. Glutamate 167 (proton acceptor) is an active-site residue. Residues glycine 173, serine 213, and glycine 234–glycine 235 each bind substrate.

Belongs to the triosephosphate isomerase family. Homodimer.

Its subcellular location is the cytoplasm. The catalysed reaction is D-glyceraldehyde 3-phosphate = dihydroxyacetone phosphate. It participates in carbohydrate biosynthesis; gluconeogenesis. The protein operates within carbohydrate degradation; glycolysis; D-glyceraldehyde 3-phosphate from glycerone phosphate: step 1/1. In terms of biological role, involved in the gluconeogenesis. Catalyzes stereospecifically the conversion of dihydroxyacetone phosphate (DHAP) to D-glyceraldehyde-3-phosphate (G3P). The chain is Triosephosphate isomerase from Latilactobacillus sakei subsp. sakei (strain 23K) (Lactobacillus sakei subsp. sakei).